A 418-amino-acid chain; its full sequence is MSFLVLPLHHSNETQSSSSALEKSIPEKDLKKPYQLLSKNQFPEKCAVCKNAAIGYHYNVPSCNGCKTFFRRTILNGKRFICMNHKNCLDEIESDESQRLCKGCRFARCIEVGMDSTAIRASVKTVEGKYLLEEVLRKQKNRKIQMQQKDNFLSLIIKQLSHLEDQIEKLHFSTIPDGFEDMRSLSEILLYNPVFDSSRIPNLTPVSNKAPKLICMTYMHSALLAAVEASKTFEFFSKISHEARMILIRHVSLIGSNMMSASFSMHHRKSDELLLPDGTVFGSIGGCLASEVLGEIKYKNQLQQILHAFLRINVDRVEYMILKAILMRNPSVPGLTLDDQLIIENERNQYAKALLEYTILHHGVLSGPARFGSLIAINPIIETQSKKQKDVYVFMKTLSAQRECSHPPKSLFDEVMDS.

The segment at residues 43–121 is a DNA-binding region (nuclear receptor); the sequence is PEKCAVCKNA…VGMDSTAIRA (79 aa). 2 consecutive NR C4-type zinc fingers follow at residues 46-66 and 82-104; these read CAVCKNAAIGYHYNVPSCNGC and CMNHKNCLDEIESDESQRLCKGC. An NR LBD domain is found at 174–414; sequence TIPDGFEDMR…SHPPKSLFDE (241 aa). Residues 403-414 form an AF-2 region; the sequence is ECSHPPKSLFDE.

The protein belongs to the nuclear hormone receptor family.

The protein localises to the nucleus. In terms of biological role, transcriptional regulator. Plays a role in modulation of lifespan and immunity. This Caenorhabditis elegans protein is Nuclear hormone receptor family member nhr-209.